A 2475-amino-acid polypeptide reads, in one-letter code: Polyprotein pp220 (2475 aa).

Gly-2 carries N-myristoyl glycine; by host lipidation. A coiled-coil region spans residues Arg-2184–Thr-2211.

It belongs to the asfivirus polyprotein pp220 family. Specific enzymatic cleavages in vivo by the viral pS273R protease yield mature proteins.

It is found in the host cytoplasm. The protein localises to the host perinuclear region. It localises to the virion. Its subcellular location is the host nucleus. Essential for the core assembly. Its myristoyl moiety may function as a membrane-anchoring signal to bind the developing core shell to the inner viral envelope. Its function is as follows. The structural protein p34 is a component of the virus core shell. In terms of biological role, the structural protein p14 is a component of the virus core shell. Functionally, the structural protein p37 is a component of the virus core shell. The structural protein p150 is a component of the virus core shell. The chain is Polyprotein pp220 from African swine fever virus (isolate Tick/Malawi/Lil 20-1/1983) (ASFV).